The chain runs to 305 residues: Oxygen-dependent coproporphyrinogen-III oxidase (305 aa).

Substrate is bound at residue Ser-99. A divalent metal cation-binding residues include His-103 and His-113. Catalysis depends on His-113, which acts as the Proton donor. 115 to 117 (NVR) contacts substrate. His-152 and His-182 together coordinate a divalent metal cation. The important for dimerization stretch occupies residues 247 to 282 (YVEFNLVLDRGTLFGLQTGGRTESILMSMPPLARWE). 265-267 (GGR) serves as a coordination point for substrate.

The protein belongs to the aerobic coproporphyrinogen-III oxidase family. In terms of assembly, homodimer. The cofactor is a divalent metal cation.

It localises to the cytoplasm. The enzyme catalyses coproporphyrinogen III + O2 + 2 H(+) = protoporphyrinogen IX + 2 CO2 + 2 H2O. It participates in porphyrin-containing compound metabolism; protoporphyrin-IX biosynthesis; protoporphyrinogen-IX from coproporphyrinogen-III (O2 route): step 1/1. Involved in the heme biosynthesis. Catalyzes the aerobic oxidative decarboxylation of propionate groups of rings A and B of coproporphyrinogen-III to yield the vinyl groups in protoporphyrinogen-IX. The polypeptide is Oxygen-dependent coproporphyrinogen-III oxidase (Vibrio cholerae serotype O1 (strain M66-2)).